The primary structure comprises 144 residues: Actin-associated protein FAM107A (144 aa).

Residues 66–112 (ELQRVLEHRRRNQLIKKKKEELEAKRLQCPFEQELLRRQQRLNQLEK) adopt a coiled-coil conformation. The short motif at 74-84 (RRRNQLIKKKK) is the Nuclear localization signal element. A disordered region spans residues 105–124 (QRLNQLEKPPEKEEDHAPEF). Residues 112 to 124 (KPPEKEEDHAPEF) show a composition bias toward basic and acidic residues.

The protein belongs to the FAM107 family. In terms of assembly, interacts with ACTB. Interacts with COMMD1; this interaction stabilizes COMMD1 in the nucleus. Interacts with MAP1A. Interacts with PRDX1. Interacts with F-actin. Widely expressed. Expressed in neurons. Expressed in malignant glial tumors. Expression is reduced or absent in a number of cancer cell lines.

The protein resides in the nucleus. Its subcellular location is the cytoplasm. The protein localises to the cytoskeleton. It is found in the stress fiber. It localises to the cell junction. The protein resides in the focal adhesion. Its subcellular location is the cell projection. The protein localises to the ruffle membrane. It is found in the synapse. Its function is as follows. Stress-inducible actin-binding protein that plays a role in synaptic and cognitive functions by modulating actin filamentous (F-actin) dynamics. Mediates polymerization of globular actin to F-actin. Also binds to, stabilizes and bundles F-actin. Involved in synaptic function by regulating neurite outgrowth in an actin-dependent manner and for the acquisition of hippocampus-dependent cognitive function, such as learning and long-term memory. Plays a role in the actin and microtubule cytoskeleton organization; negatively regulates focal adhesion (FA) assembly promoting malignant glial cell migration in an actin-, microtubule- and MAP1A-dependent manner. Also involved in neuroblastoma G1/S phase cell cycle progression and cell proliferation inhibition by stimulating ubiquitination of NF-kappa-B subunit RELA and NF-kappa-B degradation in a COMMD1- and actin-dependent manner. May play a role in tumor development. The chain is Actin-associated protein FAM107A from Homo sapiens (Human).